The primary structure comprises 325 residues: Beta-ketoacyl-[acyl-carrier-protein] synthase III (325 aa).

Catalysis depends on residues Cys-112 and His-250. The segment at 251–255 is ACP-binding; that stretch reads QANIR. Asn-280 is an active-site residue.

Belongs to the thiolase-like superfamily. FabH family. In terms of assembly, homodimer.

It is found in the cytoplasm. It carries out the reaction malonyl-[ACP] + acetyl-CoA + H(+) = 3-oxobutanoyl-[ACP] + CO2 + CoA. The protein operates within lipid metabolism; fatty acid biosynthesis. Catalyzes the condensation reaction of fatty acid synthesis by the addition to an acyl acceptor of two carbons from malonyl-ACP. Catalyzes the first condensation reaction which initiates fatty acid synthesis and may therefore play a role in governing the total rate of fatty acid production. Possesses both acetoacetyl-ACP synthase and acetyl transacylase activities. Its substrate specificity determines the biosynthesis of branched-chain and/or straight-chain of fatty acids. The protein is Beta-ketoacyl-[acyl-carrier-protein] synthase III of Clostridium acetobutylicum (strain ATCC 824 / DSM 792 / JCM 1419 / IAM 19013 / LMG 5710 / NBRC 13948 / NRRL B-527 / VKM B-1787 / 2291 / W).